Consider the following 150-residue polypeptide: 3-dehydroquinate dehydratase (150 aa).

Tyrosine 26 acts as the Proton acceptor in catalysis. Substrate-binding residues include asparagine 77, histidine 83, and aspartate 90. Histidine 103 functions as the Proton donor in the catalytic mechanism. Substrate-binding positions include 104–105 (LS) and arginine 114.

Belongs to the type-II 3-dehydroquinase family. As to quaternary structure, homododecamer.

It carries out the reaction 3-dehydroquinate = 3-dehydroshikimate + H2O. The protein operates within metabolic intermediate biosynthesis; chorismate biosynthesis; chorismate from D-erythrose 4-phosphate and phosphoenolpyruvate: step 3/7. In terms of biological role, catalyzes a trans-dehydration via an enolate intermediate. The protein is 3-dehydroquinate dehydratase of Pectobacterium carotovorum subsp. carotovorum (strain PC1).